Here is a 179-residue protein sequence, read N- to C-terminus: Ubiquitin-conjugating enzyme E2 C (179 aa).

The interval 1–31 (MASQNRDPAATSVAAARKGAEPSGGAARGPV) is disordered. Alanine 2 is subject to N-acetylalanine. A Phosphoserine modification is found at serine 3. Residues 30-175 (PVGKRLQQEL…LQETYSKQVT (146 aa)) enclose the UBC core domain. Catalysis depends on cysteine 114, which acts as the Glycyl thioester intermediate.

This sequence belongs to the ubiquitin-conjugating enzyme family. Component of the APC/C complex, composed of at least 14 distinct subunits that assemble into a complex of at least 19 chains with a combined molecular mass of around 1.2 MDa. Within this complex, directly interacts with ANAPC2. Post-translationally, autoubiquitinated by the APC/C complex, leading to its degradation by the proteasome. Its degradation plays a central role in APC/C regulation, allowing cyclin-A accumulation before S phase entry. APC/C substrates inhibit the autoubiquitination of UBE2C/UBCH10 but not its E2 function, hence APC/C remaining active until its substrates have been destroyed.

The catalysed reaction is S-ubiquitinyl-[E1 ubiquitin-activating enzyme]-L-cysteine + [E2 ubiquitin-conjugating enzyme]-L-cysteine = [E1 ubiquitin-activating enzyme]-L-cysteine + S-ubiquitinyl-[E2 ubiquitin-conjugating enzyme]-L-cysteine.. It catalyses the reaction S-ubiquitinyl-[E1 ubiquitin-activating enzyme]-L-cysteine + [acceptor protein]-L-lysine = [E1 ubiquitin-activating enzyme]-L-cysteine + N(6)-monoubiquitinyl-[acceptor protein]-L-lysine.. The protein operates within protein modification; protein ubiquitination. Functionally, accepts ubiquitin from the E1 complex and catalyzes its covalent attachment to other proteins. In vitro catalyzes 'Lys-11'- and 'Lys-48'-linked polyubiquitination. Acts as an essential factor of the anaphase promoting complex/cyclosome (APC/C), a cell cycle-regulated ubiquitin ligase that controls progression through mitosis. Acts by initiating 'Lys-11'-linked polyubiquitin chains on APC/C substrates, leading to the degradation of APC/C substrates by the proteasome and promoting mitotic exit. This chain is Ubiquitin-conjugating enzyme E2 C (UBE2C), found in Homo sapiens (Human).